Here is a 376-residue protein sequence, read N- to C-terminus: Phosphoglycerate kinase (376 aa).

Positions 1, 2, 3, 4, 17, 40, 41, 43, 44, 99, 100, 147, and 148 each coordinate (2R)-3-phosphoglycerate. Glycine 191 is an ADP binding site. Glycine 191 is a binding site for CDP. 2 residues coordinate AMP: alanine 192 and lysine 193. Alanine 192 contributes to the ATP binding site. Residue alanine 192 participates in Mg(2+) binding. Aspartate 196 is a CDP binding site. Aspartate 196 lines the Mg(2+) pocket. Position 197 (lysine 197) interacts with AMP. ATP is bound at residue lysine 197. Residue glycine 215 participates in ADP binding. Glycine 215 is a CDP binding site. AMP is bound by residues glycine 216 and glycine 290. ATP contacts are provided by glycine 216 and glycine 290. Residues glycine 315 and phenylalanine 320 each contribute to the CDP site. Phenylalanine 320 is a binding site for ADP. An AMP-binding site is contributed by glutamate 321. ATP-binding residues include glutamate 321, aspartate 352, and threonine 353. Residue aspartate 352 participates in Mg(2+) binding.

The protein belongs to the phosphoglycerate kinase family. In terms of assembly, monomer. Mg(2+) is required as a cofactor.

The catalysed reaction is (2R)-3-phosphoglycerate + ATP = (2R)-3-phospho-glyceroyl phosphate + ADP. Its pathway is carbohydrate degradation; glycolysis; pyruvate from D-glyceraldehyde 3-phosphate: step 2/5. In Glaucoma chattoni, this protein is Phosphoglycerate kinase (PGK).